A 260-amino-acid chain; its full sequence is Cytochrome c1-2, heme protein, mitochondrial (260 aa).

The transit peptide at 1–17 directs the protein to the mitochondrion; the sequence is IGAGVSGLLGFATVASA. The Mitochondrial intermembrane segment spans residues 18 to 221; the sequence is DEAEHGLECP…AAEPEMEERK (204 aa). The 108-residue stretch at 43–150 folds into the Cytochrome c domain; the sequence is ASIRRGHQVY…NGQNYVFALL (108 aa). 4 residues coordinate heme c: C56, C59, H60, and M179. The helical transmembrane segment at 222 to 241 threads the bilayer; that stretch reads LMGFKWIFVLSLALLQAAYY. Over 242 to 260 the chain is Mitochondrial matrix; sequence RRLRWSVLKSRKLVLDVVN.

Belongs to the cytochrome c family. Component of the ubiquinol-cytochrome c oxidoreductase (cytochrome b-c1 complex, complex III, CIII), a multisubunit enzyme composed of 3 respiratory subunits cytochrome b, cytochrome c1 and Rieske protein, 2 core protein subunits, and additional low-molecular weight protein subunits. The complex exists as an obligatory dimer and forms supercomplexes (SCs) in the inner mitochondrial membrane with cytochrome c oxidase (complex IV, CIV). The cofactor is heme c. In terms of tissue distribution, in all tissues analyzed.

Its subcellular location is the mitochondrion inner membrane. The catalysed reaction is a quinol + 2 Fe(III)-[cytochrome c](out) = a quinone + 2 Fe(II)-[cytochrome c](out) + 2 H(+)(out). Functionally, component of the ubiquinol-cytochrome c oxidoreductase, a multisubunit transmembrane complex that is part of the mitochondrial electron transport chain which drives oxidative phosphorylation. The respiratory chain contains 3 multisubunit complexes succinate dehydrogenase (complex II, CII), ubiquinol-cytochrome c oxidoreductase (cytochrome b-c1 complex, complex III, CIII) and cytochrome c oxidase (complex IV, CIV), that cooperate to transfer electrons derived from NADH and succinate to molecular oxygen, creating an electrochemical gradient over the inner membrane that drives transmembrane transport and the ATP synthase. The cytochrome b-c1 complex catalyzes electron transfer from ubiquinol to cytochrome c, linking this redox reaction to translocation of protons across the mitochondrial inner membrane, with protons being carried across the membrane as hydrogens on the quinol. In the process called Q cycle, 2 protons are consumed from the matrix, 4 protons are released into the intermembrane space and 2 electrons are passed to cytochrome c. Cytochrome c1 is a catalytic core subunit containing a c-type heme. It transfers electrons from the [2Fe-2S] iron-sulfur cluster of the Rieske protein to cytochrome c. The chain is Cytochrome c1-2, heme protein, mitochondrial (CYCL) from Solanum tuberosum (Potato).